The primary structure comprises 511 residues: Movement protein (511 aa).

Its subcellular location is the host cell junction. It localises to the host plasmodesma. It is found in the host cytoplasm. Functionally, transports viral genome to neighboring plant cells directly through plasmosdesmata, without any budding. The movement protein allows efficient cell to cell propagation, by bypassing the host cell wall barrier. This Rice gall dwarf virus (RGDV) protein is Movement protein.